The sequence spans 932 residues: Adhesion G protein-coupled receptor E2 (932 aa).

An N-terminal signal peptide occupies residues 1-15; it reads MWGFWLLLFWGFSGT. Residues 16–652 lie on the Extracellular side of the membrane; it reads HRWGMTTLAI…TMEFSLYIIS (637 aa). 2 consecutive EGF-like domains span residues 32–69 and 81–119; these read GVNE…SNGQ and DVNE…SAGG. Disulfide bonds link cysteine 36–cysteine 48, cysteine 42–cysteine 57, cysteine 85–cysteine 98, cysteine 92–cysteine 107, cysteine 137–cysteine 149, cysteine 143–cysteine 158, cysteine 160–cysteine 171, cysteine 177–cysteine 189, cysteine 183–cysteine 198, cysteine 226–cysteine 239, and cysteine 233–cysteine 248. The 40-residue stretch at 133 to 172 folds into the EGF-like 3; calcium-binding domain; the sequence is DVDECLTIGICPKNSNCSNSVGSYSCTCQSGFVSNGSTCE. Residues asparagine 148 and asparagine 167 are each glycosylated (N-linked (GlcNAc...) asparagine). Positions 173–210 constitute an EGF-like 4; calcium-binding domain; that stretch reads DEDECVTRNACPEHATCHNTLGSYYCTCNEGLEFSGGG. An EGF-like 5; calcium-binding domain is found at 222 to 260; it reads DVDECSRNSTLCGPSFICINTLGSYSCSCPAGFSLSTFQ. The N-linked (GlcNAc...) asparagine glycan is linked to asparagine 229. Residues asparagine 269, asparagine 283, asparagine 309, asparagine 333, asparagine 344, asparagine 363, asparagine 405, asparagine 417, asparagine 474, and asparagine 499 are each glycosylated (N-linked (GlcNAc...) asparagine). The region spanning 272–307 is the EGF-like 6; calcium-binding domain; sequence DIDECDDICPSNSSCTNTLGSYFCTCHPGFASSNGQ. 2 disulfides stabilise this stretch: cysteine 276–cysteine 286 and cysteine 280–cysteine 295. One can recognise an EGF-like 7; calcium-binding domain in the interval 319-354; the sequence is DIDECTQDPFRCGRNSSCTNVPGSYNCSCLPDFRMD. 2 cysteine pairs are disulfide-bonded: cysteine 323/cysteine 336 and cysteine 330/cysteine 345. The GAIN-B domain occupies 482–643; that stretch reads EYLEIESKVI…AIIMASGELT (162 aa). The short motif at 507–509 is the Cell attachment site element; that stretch reads RGD. 2 disulfide bridges follow: cysteine 596-cysteine 625 and cysteine 613-cysteine 627. The segment at 596–643 is GPS; the sequence is CVSWNTDVEDGRWTPSGCETVEASETHTVCSCNRMTNLAIIMASGELT. The chain crosses the membrane as a helical span at residues 653-673; the sequence is YVGTVISLVCLALAIATFLLF. At 674-681 the chain is on the cytoplasmic side; the sequence is RAVQNHNT. A helical membrane pass occupies residues 682-702; that stretch reads YLHLHLCVCLFLAKILFLTGI. The Extracellular segment spans residues 703–719; it reads DKTDNQTACAIIAGFLH. N-linked (GlcNAc...) asparagine glycosylation is present at asparagine 707. Residues 720–740 form a helical membrane-spanning segment; sequence YLFLACFFWMLVEAVMLFLMV. The Cytoplasmic portion of the chain corresponds to 741-756; the sequence is RNLKVVNYFSSRNIKM. The helical transmembrane segment at 757 to 777 threads the bilayer; the sequence is LHLCAFGYGLPVVVVIISATV. Residues 778 to 795 are Extracellular-facing; that stretch reads HPWGYGMHNRCWLNTETG. Residues 796 to 816 traverse the membrane as a helical segment; sequence FIWSFLGPVCMIITINSALLA. Residues 817-849 lie on the Cytoplasmic side of the membrane; that stretch reads WTLWVLRQKLCSVNSEVSKLKDTRLLTFKAIAQ. A helical membrane pass occupies residues 850 to 870; that stretch reads IFILGCSWVLGIFQIGPLASI. The Extracellular segment spans residues 871 to 872; the sequence is MA. Residues 873–893 traverse the membrane as a helical segment; it reads YLFTTINSLQGAFIFLIHCLL. Residues 894–932 lie on the Cytoplasmic side of the membrane; the sequence is NRQVRDEYRKLLTRKTDLSSHSQTSGILLSSMPSTSKTG.

This sequence belongs to the G-protein coupled receptor 2 family. Adhesion G-protein coupled receptor (ADGR) subfamily.

Its subcellular location is the cell membrane. Its function is as follows. Orphan receptor involved in cell adhesion and probably in cell-cell interactions involved specifically cells of the immune system. May play a role in regulatory T-cells (Treg) development. In Rattus norvegicus (Rat), this protein is Adhesion G protein-coupled receptor E2 (Adgre1).